Consider the following 238-residue polypeptide: MVQLSKRLKALREQVDRQTIYAPQKALELLKQTANAKFDETAETHIRLGINPKYADQQVRSTVVLPRGTGKAIRIAVLAKGEKVREAEKAGADIAGSEELIERIQGGFMEFDLMIATPDIMPQVARLGKLLGPRGLMPSPKGGTVTMDLVGAIREFKAGKLEFRADRTGIVHIPFGKVSFTPEALMDNLKSVQDAIDRAKPSGAKGRYWRTFHIKSTMGPSIEIDINALRDLKLEGAA.

This sequence belongs to the universal ribosomal protein uL1 family. In terms of assembly, part of the 50S ribosomal subunit.

Functionally, binds directly to 23S rRNA. The L1 stalk is quite mobile in the ribosome, and is involved in E site tRNA release. Protein L1 is also a translational repressor protein, it controls the translation of the L11 operon by binding to its mRNA. The sequence is that of Large ribosomal subunit protein uL1 from Gloeobacter violaceus (strain ATCC 29082 / PCC 7421).